The primary structure comprises 632 residues: Biosynthetic arginine decarboxylase (632 aa).

At K101 the chain carries N6-(pyridoxal phosphate)lysine. Residue 281 to 291 (FDVGGGLGVDY) coordinates substrate.

This sequence belongs to the Orn/Lys/Arg decarboxylase class-II family. SpeA subfamily. Requires Mg(2+) as cofactor. The cofactor is pyridoxal 5'-phosphate.

The enzyme catalyses L-arginine + H(+) = agmatine + CO2. It functions in the pathway amine and polyamine biosynthesis; agmatine biosynthesis; agmatine from L-arginine: step 1/1. In terms of biological role, catalyzes the biosynthesis of agmatine from arginine. This chain is Biosynthetic arginine decarboxylase, found in Klebsiella pneumoniae (strain 342).